The chain runs to 430 residues: Pyrokinin-1 receptor (430 aa).

At 1–16 (MSAGNMSHDLGPPRDP) the chain is on the extracellular side. Asn-5 carries N-linked (GlcNAc...) asparagine glycosylation. Residues 17–37 (LAIVIPVTVVYSLIFITGVVG) form a helical membrane-spanning segment. Residues 38-53 (NISTCIVIKKNRSMHT) are Cytoplasmic-facing. Residues 54–74 (ATNYYLFSLAISDFLLLLSGV) form a helical membrane-spanning segment. Residues 75-96 (PQEVSYIWSKYPYVFGEYICIG) are Extracellular-facing. The cysteines at positions 94 and 171 are disulfide-linked. The helical transmembrane segment at 97 to 117 (RGLLAETSANATVLTITAFTV) threads the bilayer. The Cytoplasmic portion of the chain corresponds to 118–140 (ERYIAICHPFLGQAMSKLSRAIR). The helical transmembrane segment at 141–161 (IIVLVWIMAIVTAIPQAAQFG) threads the bilayer. Residues 162-185 (IEHYSGVEQCGIVRVIVKHSFQLS) are Extracellular-facing. A helical transmembrane segment spans residues 186–206 (TFIFFLAPMSIILVLYLLIGV). Topologically, residues 207–281 (HLYRSTLVEG…GRLNHYGTRR (75 aa)) are cytoplasmic. Residues 282-302 (VLRMLVAVVVCFFLCWAPFHA) traverse the membrane as a helical segment. At 303-321 (QRLIAIYAPARGAKLRDQH) the chain is on the extracellular side. The helical transmembrane segment at 322 to 342 (EFVYTVMTYVSGVLYYLSTCI) threads the bilayer. Residues 343–430 (NPLLYNIMSH…QYAMIGVQVN (88 aa)) lie on the Cytoplasmic side of the membrane. Positions 388 to 397 (TNSSQTQRFS) are enriched in polar residues. Positions 388 to 413 (TNSSQTQRFSIESAEQPKPSIMQNPT) are disordered.

The protein belongs to the G-protein coupled receptor 1 family.

The protein localises to the cell membrane. Receptor for the neuropeptide CAP-3/pyrokinin-1 (TGPSASSGLWFGPRL-amide). Also activated weakly by other neuropeptides terminating in the sequence PRL-amide including pyrokinin-2, Hug-gamma, and ecdysis-triggering-hormone-1. The activity of this receptor is mediated by G proteins which activate a phosphatidyl-inositol-calcium second messenger system. The chain is Pyrokinin-1 receptor from Drosophila melanogaster (Fruit fly).